The chain runs to 473 residues: mRNA export factor ICP27 homolog (473 aa).

Disordered regions lie at residues 57–81 (QELL…NSIY) and 123–143 (QTKR…NFPM). Positions 362, 438, 442, and 447 each coordinate Zn(2+). The CHC2-type zinc-finger motif lies at 362-447 (CKYGTEKRSM…HTRRCSDPAC (86 aa)).

It belongs to the HHV-1 ICP27 protein family. In terms of assembly, associates in a complex with RNA, and host export factors NXF1/TAP and ALYREF; these interactions allow nuclear export of viral transcripts.

It localises to the host cytoplasm. The protein resides in the host nucleus. In terms of biological role, multifunctional regulator of the expression of viral genes that mediates nuclear export of viral intronless mRNAs. This immediate early (EI) protein promotes the nuclear export of viral intronless mRNAs by interacting with mRNAs and host NXF1/TAP. This chain is mRNA export factor ICP27 homolog, found in Gallus gallus (Chicken).